We begin with the raw amino-acid sequence, 278 residues long: S-methyl-5'-thioadenosine phosphorylase (278 aa).

Residues Ser13, 55-56 (RH), and 88-89 (TA) contribute to the phosphate site. A substrate-binding site is contributed by Met190. Thr191 contributes to the phosphate binding site. Residue 214-216 (DYD) participates in substrate binding.

This sequence belongs to the PNP/MTAP phosphorylase family. MTAP subfamily. As to quaternary structure, homotrimer.

It is found in the cytoplasm. Its subcellular location is the nucleus. It catalyses the reaction S-methyl-5'-thioadenosine + phosphate = 5-(methylsulfanyl)-alpha-D-ribose 1-phosphate + adenine. The protein operates within amino-acid biosynthesis; L-methionine biosynthesis via salvage pathway; S-methyl-5-thio-alpha-D-ribose 1-phosphate from S-methyl-5'-thioadenosine (phosphorylase route): step 1/1. Catalyzes the reversible phosphorylation of S-methyl-5'-thioadenosine (MTA) to adenine and 5-methylthioribose-1-phosphate. Involved in the breakdown of MTA, a major by-product of polyamine biosynthesis. Responsible for the first step in the methionine salvage pathway after MTA has been generated from S-adenosylmethionine. Has broad substrate specificity with 6-aminopurine nucleosides as preferred substrates. The protein is S-methyl-5'-thioadenosine phosphorylase of Anopheles gambiae (African malaria mosquito).